The chain runs to 721 residues: Teichoic acid poly(glycerol phosphate) polymerase (721 aa).

CDP-glycerol-binding positions include Trp443–Pro447, Arg511, Pro545–Thr546, Arg582–His584, Ser624–Ser625, and Asp629.

The protein belongs to the CDP-glycerol glycerophosphotransferase family.

The protein localises to the cell membrane. The enzyme catalyses 4-O-[(2R)-glycerylphospho]-N-acetyl-beta-D-mannosaminyl-(1-&gt;4)-N-acetyl-alpha-D-glucosaminyl di-trans,octa-cis-undecaprenyl diphosphate + n CDP-glycerol = 4-O-{[(2R)-1-glycerylphospho](n)-(2R)-1-glycerylphospho}-N-acetyl-beta-D-mannosaminyl-(1-&gt;4)-N-acetyl-alpha-D-glucosaminyl undecaprenyl diphosphate + n CMP + n H(+). It functions in the pathway cell wall biogenesis; poly(glycerol phosphate) teichoic acid biosynthesis. In terms of biological role, responsible for the polymerization of the main chain of the major teichoic acid by sequential transfer of glycerol phosphate units from CDP-glycerol to the disaccharide linkage unit. Synthesizes polymers of approximately 35 glycerol phosphate units in length. The sequence is that of Teichoic acid poly(glycerol phosphate) polymerase from Staphylococcus epidermidis (strain ATCC 35984 / DSM 28319 / BCRC 17069 / CCUG 31568 / BM 3577 / RP62A).